Here is a 135-residue protein sequence, read N- to C-terminus: Cytochrome c oxidase subunit 2 (135 aa).

Residues His81, Cys116, Cys120, and His124 each contribute to the Cu cation site.

It belongs to the cytochrome c oxidase subunit 2 family.

The protein resides in the cell membrane. The catalysed reaction is 4 Fe(II)-[cytochrome c] + O2 + 8 H(+)(in) = 4 Fe(III)-[cytochrome c] + 2 H2O + 4 H(+)(out). In terms of biological role, subunits I and II form the functional core of the enzyme complex. Electrons originating in cytochrome c are transferred via heme a and Cu(A) to the binuclear center formed by heme a3 and Cu(B). The chain is Cytochrome c oxidase subunit 2 (cbaB) from Thermus thermophilus.